A 144-amino-acid chain; its full sequence is Large ribosomal subunit protein uL13 (144 aa).

It belongs to the universal ribosomal protein uL13 family. Part of the 50S ribosomal subunit.

In terms of biological role, this protein is one of the early assembly proteins of the 50S ribosomal subunit, although it is not seen to bind rRNA by itself. It is important during the early stages of 50S assembly. The polypeptide is Large ribosomal subunit protein uL13 (Syntrophomonas wolfei subsp. wolfei (strain DSM 2245B / Goettingen)).